A 587-amino-acid polypeptide reads, in one-letter code: MNHQYIPSPIYSDQNSGVHNVNKSLHNLNINNGNNNYNYSNNNYNNNINNNNNINNNINNNNNNNNNNNNNNINQYHQNHYDQYSDNNCNNSNSNNINNNNNINNNINNNNINNNNNNINSNNNNNNNNNNNNNNNLLKIPQLNISPNGVGGGNGISNGNGVNKIFSKLDLSKVPNSYQLAHNSSMPNSPTSSNISPSTPTSMALNLSSLKSILDSPPAAPAHSASSSHNNDHRTLNINGNHHNNNNNINNNINNNVNNNINNGNGNGNGNGNNNNNNNIGVNGSGSSNSSSPSIGFSIPLLQLKQIGINNQTSPSQQSQQQQQQQQQQQQSQHNGIPLINTTEIHQRSNPSSATNSPRALYYGNESSVENSPFTTPLSSPRGPISPRATINSSMSNLQSNIRVEEQWKKIEYYVNDLSHFIYESIRNKDYSNLSELKEKIDEVVNTSKEIEIIHSIAKSLPPQTRARKKRSTKAEKLQKDLIGIKRSYVTTPKSKGTYCIFCGTMETPEWRKGPGGHKTLCNACGLHYAKNIKKENQNNGGSPNPQQNNVTTTTTTTTSTSTNSPNSNGNNFSPESAMSVSKLISD.

Low complexity predominate over residues 53-74 (NINNNINNNNNNNNNNNNNNIN). 3 disordered regions span residues 53–141 (NINN…LKIP), 179–294 (QLAH…SSPS), and 312–392 (QTSP…ATIN). The segment covering 75-86 (QYHQNHYDQYSD) has biased composition (polar residues). Composition is skewed to low complexity over residues 87 to 136 (NNCN…NNNN), 183 to 202 (NSSM…TPTS), 237 to 264 (NING…INNG), 272 to 292 (GNNN…NSSS), and 316 to 333 (SQQS…QQSQ). 2 stretches are compositionally biased toward polar residues: residues 340-358 (INTT…TNSP) and 365-379 (NESS…TPLS). A GATA-type zinc finger spans residues 500–525 (CIFCGTMETPEWRKGPGGHKTLCNAC). The interval 536–587 (ENQNNGGSPNPQQNNVTTTTTTTTSTSTNSPNSNGNNFSPESAMSVSKLISD) is disordered. The span at 538–575 (QNNGGSPNPQQNNVTTTTTTTTSTSTNSPNSNGNNFSP) shows a compositional bias: low complexity. Residues 577 to 587 (SAMSVSKLISD) are compositionally biased toward polar residues.

The chain is GATA zinc finger domain-containing protein 3 (gtaC) from Dictyostelium discoideum (Social amoeba).